We begin with the raw amino-acid sequence, 1037 residues long: Serine/threonine-protein kinase ULK2 (1037 aa).

Residues 9-271 enclose the Protein kinase domain; that stretch reads YCKRDLVGHG…FEAFFSHPFL (263 aa). ATP is bound by residues 15-23 and Lys-39; that span reads VGHGAFAVV. Asp-131 acts as the Proton acceptor in catalysis. Residues 319-350 form a disordered region; the sequence is ENLSSPPLGPPNYLQVSKDSASNSSKNSSCDT. The span at 335 to 348 shows a compositional bias: low complexity; sequence SKDSASNSSKNSSC. A Phosphoserine modification is found at Ser-430. 4 disordered regions span residues 452–480, 494–515, 540–594, and 626–697; these read CSPVPGDTVQTGGRRLSTGSSRPYSPSPL, GHPQGHEARSRHSSGSPVPQTQ, QKLR…KTPL, and HGPA…NTER. Polar residues-rich tracts occupy residues 506–515 and 571–585; these read SSGSPVPQTQ and LGTSPTKHTGSSPRN. A compositionally biased stretch (basic and acidic residues) spans 632-643; that stretch reads QSKDGNDPRECS. The span at 658–678 shows a compositional bias: polar residues; the sequence is QQQSKAVFGRSVSTGKLSEQQ. Phosphoserine occurs at positions 772 and 781. A CTD-like region region spans residues 813-1037; it reads ELPEETLMER…SALCCSTATV (225 aa).

It belongs to the protein kinase superfamily. Ser/Thr protein kinase family. APG1/unc-51/ULK1 subfamily. As to quaternary structure, component of a complex consisting of ATG13/KIAA0652, ULK1 and RB1CC1/FIP200. Interacts (via C-terminus) with ATG13/KIAA0652. Associates with the mammalian target of rapamycin complex 1 (mTORC1) through an interaction with RPTOR. Interacts with SYNGAP1. In terms of processing, autophosphorylated. In response to nutrient limitation, probably phosphorylated and activated by AMPK, leading to activate autophagy. Widely expressed.

It localises to the cytoplasmic vesicle membrane. The enzyme catalyses L-seryl-[protein] + ATP = O-phospho-L-seryl-[protein] + ADP + H(+). It catalyses the reaction L-threonyl-[protein] + ATP = O-phospho-L-threonyl-[protein] + ADP + H(+). Functionally, serine/threonine-protein kinase involved in autophagy in response to starvation. Acts upstream of phosphatidylinositol 3-kinase PIK3C3 to regulate the formation of autophagophores, the precursors of autophagosomes. Part of regulatory feedback loops in autophagy: acts both as a downstream effector and a negative regulator of mammalian target of rapamycin complex 1 (mTORC1) via interaction with RPTOR. Activated via phosphorylation by AMPK, also acts as a negative regulator of AMPK through phosphorylation of the AMPK subunits PRKAA1, PRKAB2 and PRKAG1. May phosphorylate ATG13/KIAA0652, FRS2, FRS3 and RPTOR; however such data need additional evidences. Not involved in ammonia-induced autophagy or in autophagic response of cerebellar granule neurons (CGN) to low potassium concentration. Plays a role early in neuronal differentiation and is required for granule cell axon formation: may govern axon formation via Ras-like GTPase signaling and through regulation of the Rab5-mediated endocytic pathways within developing axons. In Mus musculus (Mouse), this protein is Serine/threonine-protein kinase ULK2 (Ulk2).